The primary structure comprises 406 residues: Probable sodium/metabolite cotransporter BASS1, chloroplastic (406 aa).

The N-terminal 64 residues, 1-64 (MPLLRRPPAA…RHLCGIPSSR (64 aa)), are a transit peptide targeting the chloroplast. 9 helical membrane-spanning segments follow: residues 98-118 (VGEV…AVAL), 123-143 (AFLW…MLGM), 152-172 (LKTA…QYSV), 187-209 (PSYY…SNIV), 217-237 (VALS…LTPL), 252-272 (MGLF…GALL), 278-298 (GLVQ…VAVL), 315-335 (LQVV…GYVL), and 376-396 (VPCA…AGIW).

This sequence belongs to the bile acid:sodium symporter (BASS) (TC 2.A.28) family.

The protein resides in the membrane. The protein localises to the plastid. Its subcellular location is the chloroplast envelope. Functionally, may function as sodium-coupled metabolite transporter across the chloroplast envelope. The sequence is that of Probable sodium/metabolite cotransporter BASS1, chloroplastic (BASS1) from Oryza sativa subsp. japonica (Rice).